A 322-amino-acid polypeptide reads, in one-letter code: Peroxidase 66 (322 aa).

The signal sequence occupies residues 1–24; the sequence is MAFSKGLIFAMIFAVLAIVKPSEA. 2 disulfide bridges follow: C35–C114 and C68–C73. The Proton acceptor role is filled by H66. Ca(2+)-binding residues include D67, G72, D74, and S76. N155 carries N-linked (GlcNAc...) asparagine glycosylation. P161 is a substrate binding site. A glycan (N-linked (GlcNAc...) asparagine) is linked at N166. Residue H191 participates in heme b binding. T192 provides a ligand contact to Ca(2+). C198 and C230 are disulfide-bonded. N-linked (GlcNAc...) asparagine glycosylation occurs at N207. Residues D245, T247, and D252 each contribute to the Ca(2+) site.

This sequence belongs to the peroxidase family. Classical plant (class III) peroxidase subfamily. The cofactor is heme b. Ca(2+) is required as a cofactor.

It is found in the secreted. The catalysed reaction is 2 a phenolic donor + H2O2 = 2 a phenolic radical donor + 2 H2O. In terms of biological role, removal of H(2)O(2), oxidation of toxic reductants, biosynthesis and degradation of lignin, suberization, auxin catabolism, response to environmental stresses such as wounding, pathogen attack and oxidative stress. These functions might be dependent on each isozyme/isoform in each plant tissue. In Arabidopsis thaliana (Mouse-ear cress), this protein is Peroxidase 66 (PER66).